Reading from the N-terminus, the 603-residue chain is DNA mismatch repair protein MutL (603 aa).

Residues 336 to 346 are compositionally biased toward basic and acidic residues; the sequence is EVSKKQKEQQK. The interval 336 to 372 is disordered; the sequence is EVSKKQKEQQKSEQIQMSFEENRQPKEPPTLFSKPNI.

It belongs to the DNA mismatch repair MutL/HexB family.

Functionally, this protein is involved in the repair of mismatches in DNA. It is required for dam-dependent methyl-directed DNA mismatch repair. May act as a 'molecular matchmaker', a protein that promotes the formation of a stable complex between two or more DNA-binding proteins in an ATP-dependent manner without itself being part of a final effector complex. This chain is DNA mismatch repair protein MutL, found in Listeria innocua serovar 6a (strain ATCC BAA-680 / CLIP 11262).